Here is a 318-residue protein sequence, read N- to C-terminus: tRNA U34 carboxymethyltransferase (318 aa).

Residues Lys-88, Trp-102, Lys-107, Gly-126, 176–177, Met-192, Tyr-196, and Arg-311 contribute to the carboxy-S-adenosyl-L-methionine site; that span reads LE.

It belongs to the class I-like SAM-binding methyltransferase superfamily. CmoB family. Homotetramer.

The catalysed reaction is carboxy-S-adenosyl-L-methionine + 5-hydroxyuridine(34) in tRNA = 5-carboxymethoxyuridine(34) in tRNA + S-adenosyl-L-homocysteine + H(+). Its function is as follows. Catalyzes carboxymethyl transfer from carboxy-S-adenosyl-L-methionine (Cx-SAM) to 5-hydroxyuridine (ho5U) to form 5-carboxymethoxyuridine (cmo5U) at position 34 in tRNAs. The polypeptide is tRNA U34 carboxymethyltransferase (Pseudomonas putida (strain W619)).